Reading from the N-terminus, the 438-residue chain is RING finger protein 150 (438 aa).

A signal peptide spans 1-34; it reads MAMSLIQACCSLALSTWLLSFCFVHLLCLDFTVA. Topologically, residues 35–208 are extracellular; that stretch reads EKEEWYTAFV…NLQKYVSRTS (174 aa). N-linked (GlcNAc...) asparagine glycans are attached at residues N45, N125, N153, and N186. A PA domain is found at 81-183; sequence SPKQDARGEV…PKGKEIVSLL (103 aa). Residues 209 to 229 traverse the membrane as a helical segment; it reads VVFVSISFIVLMIISLAWLVF. Residues 230-438 are Cytoplasmic-facing; that stretch reads YYIQRFRYAN…TDQDCEEVKS (209 aa). The RING-type; atypical zinc-finger motif lies at 278–319; the sequence is CAVCIEGYKPNDVVRILPCRHLFHKSCVDPWLLDHRTCPMCK.

It localises to the membrane. This chain is RING finger protein 150 (RNF150), found in Homo sapiens (Human).